The primary structure comprises 80 residues: MAAMKYKGSVFIILVILLLSSSLLAHSSSTKSFFWLGETQDTKAMKKEKKIDGGTANEVEERQVPTGSDPLHHKHIPFTP.

Residues 1–25 (MAAMKYKGSVFIILVILLLSSSLLA) form the signal peptide. Residues 45–80 (MKKEKKIDGGTANEVEERQVPTGSDPLHHKHIPFTP) are disordered. Pro-65 carries the hydroxyproline modification.

The protein belongs to the CLV3/ESR signal peptide family. In terms of tissue distribution, mostly expressed at low levels in stems and apex, and, to a lower extent, in roots, seedlings, leaves, flowers, siliques and pollen.

It localises to the secreted. It is found in the extracellular space. Functionally, extracellular signal peptide secreted by differentiated root cells that regulates root cell fate. Acts with ACR4 as a ligand-receptor pair in a signal transduction pathway, coordinating movement of the root tip and organization of cell divisions in the root meristem. Promotes cell differentiation in the distal root meristem in a dose-dependent manner, especially the transition from columella stem cells (CSC) daughters into columella cells (CCs). Induces ACR4 expression in root quiescent center (QC). Involved in WUX5 QC-specific expression pattern regulation. Regulates the transition of protophloem cells from proliferation to differentiation, thus impinging on postembryonic growth capacity of the root meristem; this signaling pathway requires CRN and CLV2. The protein is CLAVATA3/ESR (CLE)-related protein 40 of Arabidopsis thaliana (Mouse-ear cress).